Reading from the N-terminus, the 205-residue chain is Outer-membrane lipoprotein LolB (205 aa).

A signal peptide spans 1 to 17 (MFLRHVIVFSFIALLAG). Cys18 carries the N-palmitoyl cysteine lipid modification. Cys18 carries the S-diacylglycerol cysteine lipid modification.

Belongs to the LolB family. Monomer.

It is found in the cell outer membrane. Plays a critical role in the incorporation of lipoproteins in the outer membrane after they are released by the LolA protein. This is Outer-membrane lipoprotein LolB from Pseudomonas fluorescens (strain Pf0-1).